A 298-amino-acid chain; its full sequence is N-acetylmuramic acid 6-phosphate etherase (298 aa).

Residues 54-217 form the SIS domain; sequence TIKAMKQGGR…STTVMIGLGK (164 aa). E82 (proton donor) is an active-site residue. E113 is a catalytic residue.

Belongs to the GCKR-like family. MurNAc-6-P etherase subfamily. In terms of assembly, homodimer.

It catalyses the reaction N-acetyl-D-muramate 6-phosphate + H2O = N-acetyl-D-glucosamine 6-phosphate + (R)-lactate. It functions in the pathway amino-sugar metabolism; N-acetylmuramate degradation. Specifically catalyzes the cleavage of the D-lactyl ether substituent of MurNAc 6-phosphate, producing GlcNAc 6-phosphate and D-lactate. The chain is N-acetylmuramic acid 6-phosphate etherase from Halalkalibacterium halodurans (strain ATCC BAA-125 / DSM 18197 / FERM 7344 / JCM 9153 / C-125) (Bacillus halodurans).